The sequence spans 492 residues: Cytoplasmic dynein 1 light intermediate chain 2 (492 aa).

61–68 contributes to the ATP binding site; sequence GEDGSGKT. Disordered stretches follow at residues 187-206, 371-423, and 437-492; these read PEEG…SGSD, AKQP…KNNA, and LSKK…ENEA. Ser194 carries the phosphoserine modification. A compositionally biased stretch (polar residues) spans 371-381; it reads AKQPATPTRAS. Ser383 and Ser391 each carry phosphoserine. An Omega-N-methylarginine modification is found at Arg397. A Phosphothreonine modification is found at Thr441. 2 positions are modified to phosphoserine: Ser443 and Ser446. Positions 452–469 are enriched in polar residues; it reads VQSTAKKSGQKTVLSNVQ. The segment covering 471 to 480 has biased composition (basic and acidic residues); sequence ELDRMTRKPD. Over residues 482–492 the composition is skewed to polar residues; that stretch reads MVTNSSTENEA.

The protein belongs to the dynein light intermediate chain family. In terms of assembly, homodimer. The cytoplasmic dynein 1 complex consists of two catalytic heavy chains (HCs) and a number of non-catalytic subunits presented by intermediate chains (ICs), light intermediate chains (LICs) and light chains (LCs); the composition seems to vary in respect to the IC, LIC and LC composition. The heavy chain homodimer serves as a scaffold for the probable homodimeric assembly of the respective non-catalytic subunits. The ICs and LICs bind directly to the HC dimer and the LCs assemble on the IC dimer. Interacts with DYNC1H1; DYNC1LI1 and DYNC1LI2 bind mutually exclusive to DYNC1H.

The protein localises to the cytoplasm. It localises to the cytoskeleton. Functionally, acts as one of several non-catalytic accessory components of the cytoplasmic dynein 1 complex that are thought to be involved in linking dynein to cargos and to adapter proteins that regulate dynein function. Cytoplasmic dynein 1 acts as a motor for the intracellular retrograde motility of vesicles and organelles along microtubules. May play a role in binding dynein to membranous organelles or chromosomes. The polypeptide is Cytoplasmic dynein 1 light intermediate chain 2 (DYNC1LI2) (Pongo abelii (Sumatran orangutan)).